Here is a 415-residue protein sequence, read N- to C-terminus: Gamma-glutamyl phosphate reductase (415 aa).

It belongs to the gamma-glutamyl phosphate reductase family.

The protein localises to the cytoplasm. The catalysed reaction is L-glutamate 5-semialdehyde + phosphate + NADP(+) = L-glutamyl 5-phosphate + NADPH + H(+). It functions in the pathway amino-acid biosynthesis; L-proline biosynthesis; L-glutamate 5-semialdehyde from L-glutamate: step 2/2. In terms of biological role, catalyzes the NADPH-dependent reduction of L-glutamate 5-phosphate into L-glutamate 5-semialdehyde and phosphate. The product spontaneously undergoes cyclization to form 1-pyrroline-5-carboxylate. This is Gamma-glutamyl phosphate reductase from Bacillus thuringiensis subsp. konkukian (strain 97-27).